The primary structure comprises 238 residues: DNA damage-regulated autophagy modulator protein 1 (238 aa).

6 helical membrane-spanning segments follow: residues 9–29 (AFVP…SYVV), 53–73 (SGIF…TMYT), 91–111 (VFNL…GIVA), 116–136 (LAVP…GVVY), 161–181 (MAIS…ASLI), and 200–220 (VSAI…LTFI).

The protein belongs to the DRAM/TMEM150 family.

Its subcellular location is the lysosome membrane. Functionally, lysosomal modulator of autophagy that plays a central role in p53/TP53-mediated apoptosis. Not involved in p73/TP73-mediated autophagy. This chain is DNA damage-regulated autophagy modulator protein 1 (Dram1), found in Mus musculus (Mouse).